Here is a 109-residue protein sequence, read N- to C-terminus: Cell division protein ZapA (109 aa).

Positions 21–99 (PEQQDALNQA…IEQALLEQGR (79 aa)) form a coiled coil.

It belongs to the ZapA family. Type 1 subfamily. As to quaternary structure, homodimer. Interacts with FtsZ.

It is found in the cytoplasm. In terms of biological role, activator of cell division through the inhibition of FtsZ GTPase activity, therefore promoting FtsZ assembly into bundles of protofilaments necessary for the formation of the division Z ring. It is recruited early at mid-cell but it is not essential for cell division. The sequence is that of Cell division protein ZapA from Pectobacterium carotovorum subsp. carotovorum (strain PC1).